The primary structure comprises 38 residues: Alpha-amylase (38 aa).

Belongs to the glycosyl hydrolase 13 family. Monomer. It depends on Ca(2+) as a cofactor. Chloride is required as a cofactor. In terms of tissue distribution, expressed by the venom gland.

It localises to the secreted. It catalyses the reaction Endohydrolysis of (1-&gt;4)-alpha-D-glucosidic linkages in polysaccharides containing three or more (1-&gt;4)-alpha-linked D-glucose units.. The polypeptide is Alpha-amylase (Tityus serrulatus (Brazilian scorpion)).